Here is a 328-residue protein sequence, read N- to C-terminus: Ribose-phosphate pyrophosphokinase (328 aa).

Residues 39–41 (DGE) and 98–99 (RQ) each bind ATP. The Mg(2+) site is built by His-132 and Asp-172. The active site involves Lys-195. D-ribose 5-phosphate contacts are provided by residues Arg-197, Asp-221, and 225 to 229 (DTGGT).

The protein belongs to the ribose-phosphate pyrophosphokinase family. Class I subfamily. In terms of assembly, homohexamer. It depends on Mg(2+) as a cofactor.

It localises to the cytoplasm. It catalyses the reaction D-ribose 5-phosphate + ATP = 5-phospho-alpha-D-ribose 1-diphosphate + AMP + H(+). It functions in the pathway metabolic intermediate biosynthesis; 5-phospho-alpha-D-ribose 1-diphosphate biosynthesis; 5-phospho-alpha-D-ribose 1-diphosphate from D-ribose 5-phosphate (route I): step 1/1. Involved in the biosynthesis of the central metabolite phospho-alpha-D-ribosyl-1-pyrophosphate (PRPP) via the transfer of pyrophosphoryl group from ATP to 1-hydroxyl of ribose-5-phosphate (Rib-5-P). This is Ribose-phosphate pyrophosphokinase from Mycoplasma pneumoniae (strain ATCC 29342 / M129 / Subtype 1) (Mycoplasmoides pneumoniae).